The following is a 257-amino-acid chain: uncharacterized protein (257 aa).

Residues Ser-122 and His-236 each act as charge relay system in the active site.

Belongs to the peptidase S9B family.

This is an uncharacterized protein from Bacillus subtilis (strain 168).